Here is an 860-residue protein sequence, read N- to C-terminus: Alpha,alpha-trehalose-phosphate synthase [UDP-forming] 6 (860 aa).

Phosphoserine is present on S5. Positions 53–557 (DRIIIVANEL…ARSFLQDLER (505 aa)) are glycosyltransferase.

It in the N-terminal section; belongs to the glycosyltransferase 20 family. In the C-terminal section; belongs to the trehalose phosphatase family. Binds to the phosphopeptide-binding site of GRF/14-3-3. Post-translationally, phosphorylated. Expressed in seedlings, leaves, stems, flowers, siliques and roots.

The catalysed reaction is D-glucose 6-phosphate + UDP-alpha-D-glucose = alpha,alpha-trehalose 6-phosphate + UDP + H(+). Its function is as follows. Regulates plant architecture, shape of epidermal pavement cells and branching of trichomes. The chain is Alpha,alpha-trehalose-phosphate synthase [UDP-forming] 6 from Arabidopsis thaliana (Mouse-ear cress).